The chain runs to 154 residues: 3-dehydroquinate dehydratase 2 (154 aa).

The active-site Proton acceptor is Tyr-23. 3 residues coordinate substrate: Asn-79, His-85, and Asp-92. His-105 (proton donor) is an active-site residue. Residues 106-107 and Arg-116 contribute to the substrate site; that span reads IS.

Belongs to the type-II 3-dehydroquinase family. As to quaternary structure, homododecamer.

It catalyses the reaction 3-dehydroquinate = 3-dehydroshikimate + H2O. It participates in metabolic intermediate biosynthesis; chorismate biosynthesis; chorismate from D-erythrose 4-phosphate and phosphoenolpyruvate: step 3/7. Catalyzes a trans-dehydration via an enolate intermediate. This chain is 3-dehydroquinate dehydratase 2 (aroQ2), found in Ralstonia nicotianae (strain ATCC BAA-1114 / GMI1000) (Ralstonia solanacearum).